We begin with the raw amino-acid sequence, 204 residues long: Urease accessory protein UreG (204 aa).

11–18 contacts GTP; sequence GPVGAGKT.

The protein belongs to the SIMIBI class G3E GTPase family. UreG subfamily. In terms of assembly, homodimer. UreD, UreF and UreG form a complex that acts as a GTP-hydrolysis-dependent molecular chaperone, activating the urease apoprotein by helping to assemble the nickel containing metallocenter of UreC. The UreE protein probably delivers the nickel.

Its subcellular location is the cytoplasm. Functionally, facilitates the functional incorporation of the urease nickel metallocenter. This process requires GTP hydrolysis, probably effectuated by UreG. The chain is Urease accessory protein UreG from Staphylococcus epidermidis (strain ATCC 35984 / DSM 28319 / BCRC 17069 / CCUG 31568 / BM 3577 / RP62A).